A 641-amino-acid chain; its full sequence is Phosphomethylpyrimidine synthase (641 aa).

Residues Asn-221, Met-250, Tyr-279, His-315, 335–337 (SRG), 376–379 (DGLR), and Glu-415 each bind substrate. Zn(2+) is bound at residue His-419. Tyr-442 contributes to the substrate binding site. His-483 provides a ligand contact to Zn(2+). 3 residues coordinate [4Fe-4S] cluster: Cys-563, Cys-566, and Cys-571.

This sequence belongs to the ThiC family. In terms of assembly, homodimer. The cofactor is [4Fe-4S] cluster.

The catalysed reaction is 5-amino-1-(5-phospho-beta-D-ribosyl)imidazole + S-adenosyl-L-methionine = 4-amino-2-methyl-5-(phosphooxymethyl)pyrimidine + CO + 5'-deoxyadenosine + formate + L-methionine + 3 H(+). It functions in the pathway cofactor biosynthesis; thiamine diphosphate biosynthesis. Catalyzes the synthesis of the hydroxymethylpyrimidine phosphate (HMP-P) moiety of thiamine from aminoimidazole ribotide (AIR) in a radical S-adenosyl-L-methionine (SAM)-dependent reaction. The chain is Phosphomethylpyrimidine synthase from Rhodopseudomonas palustris (strain BisA53).